Consider the following 332-residue polypeptide: MSRDRGARGLRKYGRFALATGAATALSLTASGCVVVHGEREVLPAAKKSEATRALAGFLTAYNKAQKANDRSLDAGRVTGALADIDGAKLEAGHKTAPAGNTDYTPLKLTDAKFAIPAKAGWPRWFVADTASNRDKNRWVLVFTRGSANDVWQVSYLTALAPADVPRFKKDKDGWAEPVTADDAALAVRPQKLGAAYATYLKSGGDTFADGRFTSGLRAGRKKNASKPGLARQYMDEPLNSGDHAPLGLRTTDGGALVFFVTHHYEKQTAAQGVNITVNDPNIKALMTGDPKQSLTMEFVSNQAVLDPAKGSGDQRVTFLSKVAGLTAAKGE.

Positions 1 to 32 are cleaved as a signal peptide; it reads MSRDRGARGLRKYGRFALATGAATALSLTASG. A lipid anchor (N-palmitoyl cysteine) is attached at C33. The S-diacylglycerol cysteine moiety is linked to residue C33.

Its subcellular location is the cell membrane. This is an uncharacterized protein from Streptomyces avermitilis (strain ATCC 31267 / DSM 46492 / JCM 5070 / NBRC 14893 / NCIMB 12804 / NRRL 8165 / MA-4680).